We begin with the raw amino-acid sequence, 336 residues long: ATP-dependent 6-phosphofructokinase 3 (336 aa).

ATP is bound by residues Gly10, 72-73 (RE), and 108-111 (GNGT). Asn109 is a Mg(2+) binding site. Residues 131-133 (TID), Arg168, 175-177 (MGH), Glu228, Arg255, and 261-264 (YIQR) each bind substrate. The active-site Proton acceptor is Asp133.

The protein belongs to the phosphofructokinase type A (PFKA) family. Mixed-substrate PFK group III subfamily. In terms of assembly, homodimer or homotetramer. Requires Mg(2+) as cofactor.

It localises to the cytoplasm. The catalysed reaction is beta-D-fructose 6-phosphate + ATP = beta-D-fructose 1,6-bisphosphate + ADP + H(+). It participates in carbohydrate degradation; glycolysis; D-glyceraldehyde 3-phosphate and glycerone phosphate from D-glucose: step 3/4. Functionally, catalyzes the phosphorylation of D-fructose 6-phosphate to fructose 1,6-bisphosphate by ATP, the first committing step of glycolysis. In Bacteroides thetaiotaomicron (strain ATCC 29148 / DSM 2079 / JCM 5827 / CCUG 10774 / NCTC 10582 / VPI-5482 / E50), this protein is ATP-dependent 6-phosphofructokinase 3.